A 690-amino-acid polypeptide reads, in one-letter code: Elongation factor G (690 aa).

Positions 8–283 (EYIRNIGICA…AVVGFLPSPI (276 aa)) constitute a tr-type G domain. GTP-binding positions include 17–24 (AHIDAGKT), 81–85 (DTPGH), and 135–138 (NKMD).

Belongs to the TRAFAC class translation factor GTPase superfamily. Classic translation factor GTPase family. EF-G/EF-2 subfamily.

The protein resides in the cytoplasm. In terms of biological role, catalyzes the GTP-dependent ribosomal translocation step during translation elongation. During this step, the ribosome changes from the pre-translocational (PRE) to the post-translocational (POST) state as the newly formed A-site-bound peptidyl-tRNA and P-site-bound deacylated tRNA move to the P and E sites, respectively. Catalyzes the coordinated movement of the two tRNA molecules, the mRNA and conformational changes in the ribosome. This Rickettsia canadensis (strain McKiel) protein is Elongation factor G.